We begin with the raw amino-acid sequence, 210 residues long: Thiamine-phosphate synthase (210 aa).

Residues 39–43 (QLREK) and N71 each bind 4-amino-2-methyl-5-(diphosphooxymethyl)pyrimidine. The Mg(2+) site is built by D72 and D91. S110 contacts 4-amino-2-methyl-5-(diphosphooxymethyl)pyrimidine. 134–136 (TPT) is a binding site for 2-[(2R,5Z)-2-carboxy-4-methylthiazol-5(2H)-ylidene]ethyl phosphate. Residue K137 coordinates 4-amino-2-methyl-5-(diphosphooxymethyl)pyrimidine. G163 contacts 2-[(2R,5Z)-2-carboxy-4-methylthiazol-5(2H)-ylidene]ethyl phosphate.

It belongs to the thiamine-phosphate synthase family. Requires Mg(2+) as cofactor.

It catalyses the reaction 2-[(2R,5Z)-2-carboxy-4-methylthiazol-5(2H)-ylidene]ethyl phosphate + 4-amino-2-methyl-5-(diphosphooxymethyl)pyrimidine + 2 H(+) = thiamine phosphate + CO2 + diphosphate. It carries out the reaction 2-(2-carboxy-4-methylthiazol-5-yl)ethyl phosphate + 4-amino-2-methyl-5-(diphosphooxymethyl)pyrimidine + 2 H(+) = thiamine phosphate + CO2 + diphosphate. The enzyme catalyses 4-methyl-5-(2-phosphooxyethyl)-thiazole + 4-amino-2-methyl-5-(diphosphooxymethyl)pyrimidine + H(+) = thiamine phosphate + diphosphate. Its pathway is cofactor biosynthesis; thiamine diphosphate biosynthesis; thiamine phosphate from 4-amino-2-methyl-5-diphosphomethylpyrimidine and 4-methyl-5-(2-phosphoethyl)-thiazole: step 1/1. Functionally, condenses 4-methyl-5-(beta-hydroxyethyl)thiazole monophosphate (THZ-P) and 2-methyl-4-amino-5-hydroxymethyl pyrimidine pyrophosphate (HMP-PP) to form thiamine monophosphate (TMP). This is Thiamine-phosphate synthase from Campylobacter jejuni subsp. jejuni serotype O:2 (strain ATCC 700819 / NCTC 11168).